The sequence spans 329 residues: BTB/POZ domain-containing adapter for CUL3-mediated RhoA degradation protein 1 (329 aa).

Residues 1 to 31 form a disordered region; it reads MSAEASGPAPAAAECLESPSPSSVEPGSPSY. The BTB domain occupies 41 to 109; it reads KYVKLNVGGS…LRDGSVPLPE (69 aa).

It belongs to the BACURD family. Homotetramer; forms a two-fold symmetric tetramer in solution. Interacts with CUL3; interaction is direct and forms a 5:5 heterodecamer. Component of the BCR(KCTD13) E3 ubiquitin ligase complex, at least composed of CUL3, KCTD13/BACURD1 and RBX1. Interacts with RHOA; with a preference for RhoA-GDP. Interacts with POLD2 and PCNA. Interacts with SPRTN.

The protein localises to the nucleus. It functions in the pathway protein modification; protein ubiquitination. In terms of biological role, substrate-specific adapter of a BCR (BTB-CUL3-RBX1) E3 ubiquitin-protein ligase complex required for synaptic transmission. The BCR(KCTD13) E3 ubiquitin ligase complex mediates the ubiquitination of RHOA, leading to its degradation by the proteasome, thereby regulating the actin cytoskeleton and promoting synaptic transmission. The protein is BTB/POZ domain-containing adapter for CUL3-mediated RhoA degradation protein 1 (Kctd13) of Mus musculus (Mouse).